The chain runs to 393 residues: Argininosuccinate synthase (393 aa).

ATP-binding positions include 7-15 (AYSGGLDTS) and alanine 34. Positions 85 and 90 each coordinate L-citrulline. Glycine 115 serves as a coordination point for ATP. The L-aspartate site is built by threonine 117, asparagine 121, and aspartate 122. Asparagine 121 serves as a coordination point for L-citrulline. L-citrulline-binding residues include arginine 125, serine 176, serine 185, glutamate 261, and tyrosine 273.

The protein belongs to the argininosuccinate synthase family. Type 1 subfamily. In terms of assembly, homotetramer.

The protein localises to the cytoplasm. It catalyses the reaction L-citrulline + L-aspartate + ATP = 2-(N(omega)-L-arginino)succinate + AMP + diphosphate + H(+). It participates in amino-acid biosynthesis; L-arginine biosynthesis; L-arginine from L-ornithine and carbamoyl phosphate: step 2/3. The protein is Argininosuccinate synthase of Ehrlichia chaffeensis (strain ATCC CRL-10679 / Arkansas).